The following is a 389-amino-acid chain: snRNA-activating protein complex subunit 1 (389 aa).

Over residues 1–15 the composition is skewed to low complexity; that stretch reads MGTPAGAGTRPTGAG. 3 disordered regions span residues 1–22, 245–276, and 290–389; these read MGTP…GVGI, WHKE…ERCE, and SAVV…KRKC. Residues 20–187 form an SNAPC3-binding region; the sequence is VGIPPGLQTD…QKFKDPNDRV (168 aa). The segment at 183–287 is SNAPC4-binding; it reads PNDRVMKLIT…AVSLAKIKAK (105 aa). Residues 245-262 show a composition bias toward basic and acidic residues; the sequence is WHKERKNPSLKPKLKDGE. Residues Ser308 and Ser309 each carry the phosphoserine modification.

Part of the SNAPc complex composed of 5 subunits: SNAPC1, SNAPC2, SNAPC3, SNAPC4 and SNAPC5. SNAPC1 interacts with SNAPC3, SNAPC4 and TBP.

The protein resides in the nucleus. In terms of biological role, part of the SNAPc complex required for the transcription of both RNA polymerase II and III small-nuclear RNA genes. Binds to the proximal sequence element (PSE), a non-TATA-box basal promoter element common to these 2 types of genes. Recruits TBP and BRF2 to the U6 snRNA TATA box. This chain is snRNA-activating protein complex subunit 1 (Snapc1), found in Mus musculus (Mouse).